The chain runs to 951 residues: Coiled-coil and C2 domain-containing protein 1A (951 aa).

4 disordered regions span residues 80-139 (CMRD…LETT), 185-266 (AIDE…RQRD), 306-346 (VDLS…PPPR), and 437-491 (NQDE…TRAQ). The segment covering 84–104 (PDEDEEEGTDEDDLEADDDLL) has biased composition (acidic residues). 3 positions are modified to phosphothreonine: threonine 92, threonine 204, and threonine 206. Over residues 201–210 (PASTPTYSPA) the composition is skewed to low complexity. Residue serine 208 is modified to Phosphoserine; by CDK1. A phosphoserine mark is found at serine 253 and serine 324. Over residues 311–333 (LPPPPDQLPPDPPSPPSQPPTPA) the composition is skewed to pro residues. Residues 346 to 392 (RTLLEALEQRMERYQVAAAQAKSKGDQRKARMHERIVKQYQDAIRAH) adopt a coiled-coil conformation. A Phosphoserine modification is found at serine 455. The span at 475–488 (SAPTAKAPPKATST) shows a compositional bias: low complexity. Residues 484–517 (KATSTRAQQQLAFLEGRKKQLLQAALRAKQKNDV) are a coiled coil. The 135-residue stretch at 637-771 (RFEQRTFSVI…EIACEVREIL (135 aa)) folds into the C2 domain. The segment at 818 to 841 (TQVAGPKGKAPPVPAPARESGNRS) is disordered.

Belongs to the CC2D1 family. In terms of processing, phosphorylation on Ser-208 by CDK1 promotes spindle pole localization and association with SCC1/RAD21.

It is found in the cytoplasm. It localises to the nucleus. The protein localises to the cytoskeleton. The protein resides in the microtubule organizing center. Its subcellular location is the centrosome. Transcription factor that binds specifically to the DRE (dual repressor element) and represses HTR1A gene transcription in neuronal cells. The combination of calcium and ATP specifically inactivates the binding with FRE. May play a role in the altered regulation of HTR1A associated with anxiety and major depression. Mediates HDAC-independent repression of HTR1A promoter in neuronal cell. Performs essential function in controlling functional maturation of synapses. Plays distinct roles depending on its localization. When cytoplasmic, acts as a scaffold protein in the PI3K/PDK1/AKT pathway. Repressor of HTR1A when nuclear. In the centrosome, regulates spindle pole localization of the cohesin subunit SCC1/RAD21, thereby mediating centriole cohesion during mitosis. The sequence is that of Coiled-coil and C2 domain-containing protein 1A (CC2D1A) from Homo sapiens (Human).